Consider the following 328-residue polypeptide: 4-hydroxy-2-oxoglutarate aldolase, mitochondrial (328 aa).

The transit peptide at 1-26 directs the protein to the mitochondrion; sequence MFGRTLFPARVIALGSGLFRTPLRTL. Substrate is bound at residue 76-77; sequence SN. Residue lysine 195 is the Schiff-base intermediate with substrate of the active site. Serine 197 and glycine 221 together coordinate substrate.

It belongs to the DapA family. As to quaternary structure, homotetramer.

Its subcellular location is the mitochondrion. It catalyses the reaction (4S)-4-hydroxy-2-oxoglutarate = glyoxylate + pyruvate. It carries out the reaction (4R)-4-hydroxy-2-oxoglutarate = glyoxylate + pyruvate. Inhibited by divalent cations. Catalyzes the final step in the metabolic pathway of hydroxyproline. The polypeptide is 4-hydroxy-2-oxoglutarate aldolase, mitochondrial (hoga1) (Xenopus tropicalis (Western clawed frog)).